Here is a 145-residue protein sequence, read N- to C-terminus: Large ribosomal subunit protein uL13 (145 aa).

Belongs to the universal ribosomal protein uL13 family. Part of the 50S ribosomal subunit.

Its function is as follows. This protein is one of the early assembly proteins of the 50S ribosomal subunit, although it is not seen to bind rRNA by itself. It is important during the early stages of 50S assembly. The protein is Large ribosomal subunit protein uL13 of Bacillus mycoides (strain KBAB4) (Bacillus weihenstephanensis).